Here is a 34-residue protein sequence, read N- to C-terminus: Phalloidin proprotein (34 aa).

Positions 1–10 (MSDINTTCLP) are excised as a propeptide. Positions 11-17 (AWLATCP) form a cross-link, cyclopeptide (Ala-Pro). The 2'-cysteinyl-6'-hydroxytryptophan sulfoxide (Trp-Cys) cross-link spans 12–16 (WLATC). Residues 18-34 (CTGDDVNPTLTCGESLC) constitute a propeptide that is removed on maturation.

This sequence belongs to the MSDIN fungal toxin family. In terms of processing, processed by the macrocyclase-peptidase enzyme POPB to yield a toxic cyclic heptapeptide. POPB first removes 10 residues from the N-terminus. Conformational trapping of the remaining peptide forces the enzyme to release this intermediate rather than proceed to macrocyclization. The enzyme rebinds the remaining peptide in a different conformation and catalyzes macrocyclization of the N-terminal 7 residues.

In terms of biological role, toxin that belongs to the bicyclic heptapeptides called phallotoxins. Although structurally related to amatoxins, phallotoxins have a different mode of action, which is the stabilization of F-actin. Phallotoxins are poisonous when administered parenterally, but not orally because of poor absorption. This chain is Phalloidin proprotein, found in Amanita phalloides (Death cap).